The sequence spans 207 residues: Dephospho-CoA kinase (207 aa).

The region spanning 11–207 (RIGLTGGIAS…LLKMSPTAEL (197 aa)) is the DPCK domain. 19–24 (ASGKSS) is an ATP binding site.

This sequence belongs to the CoaE family.

It localises to the cytoplasm. It carries out the reaction 3'-dephospho-CoA + ATP = ADP + CoA + H(+). It participates in cofactor biosynthesis; coenzyme A biosynthesis; CoA from (R)-pantothenate: step 5/5. Functionally, catalyzes the phosphorylation of the 3'-hydroxyl group of dephosphocoenzyme A to form coenzyme A. This Synechococcus sp. (strain CC9605) protein is Dephospho-CoA kinase.